The sequence spans 365 residues: 3-dehydroquinate synthase (365 aa).

NAD(+) contacts are provided by residues 69 to 74 (DGEAHK), 103 to 107 (GVIGD), 127 to 128 (TT), lysine 140, and lysine 149. Zn(2+)-binding residues include glutamate 182, histidine 245, and histidine 262.

The protein belongs to the sugar phosphate cyclases superfamily. Dehydroquinate synthase family. It depends on Co(2+) as a cofactor. Zn(2+) serves as cofactor. Requires NAD(+) as cofactor.

It localises to the cytoplasm. It catalyses the reaction 7-phospho-2-dehydro-3-deoxy-D-arabino-heptonate = 3-dehydroquinate + phosphate. It functions in the pathway metabolic intermediate biosynthesis; chorismate biosynthesis; chorismate from D-erythrose 4-phosphate and phosphoenolpyruvate: step 2/7. Its function is as follows. Catalyzes the conversion of 3-deoxy-D-arabino-heptulosonate 7-phosphate (DAHP) to dehydroquinate (DHQ). In Pseudomonas putida (strain ATCC 700007 / DSM 6899 / JCM 31910 / BCRC 17059 / LMG 24140 / F1), this protein is 3-dehydroquinate synthase.